The following is a 224-amino-acid chain: UPF0758 protein Lm4b_01560 (224 aa).

In terms of domain architecture, MPN spans 102 to 224 (VVRCPEDAVK…YISLKEKGYF (123 aa)). Histidine 173, histidine 175, and aspartate 186 together coordinate Zn(2+). A JAMM motif motif is present at residues 173-186 (HNHPSGDPTPSSED).

It belongs to the UPF0758 family.

The polypeptide is UPF0758 protein Lm4b_01560 (Listeria monocytogenes serotype 4b (strain CLIP80459)).